The following is a 97-amino-acid chain: YcgL domain-containing protein CKO_01183 (97 aa).

The YcgL domain occupies 1-85; the sequence is MFCVIYRSSK…PPEDLLKQHL (85 aa). The tract at residues 74–97 is disordered; that stretch reads PPPPEDLLKQHLSAPGENKPDAKS.

This chain is YcgL domain-containing protein CKO_01183, found in Citrobacter koseri (strain ATCC BAA-895 / CDC 4225-83 / SGSC4696).